Reading from the N-terminus, the 187-residue chain is Threonylcarbamoyl-AMP synthase (187 aa).

The region spanning Gln3–Gly187 is the YrdC-like domain.

The protein belongs to the SUA5 family. TsaC subfamily.

The protein resides in the cytoplasm. It carries out the reaction L-threonine + hydrogencarbonate + ATP = L-threonylcarbamoyladenylate + diphosphate + H2O. Required for the formation of a threonylcarbamoyl group on adenosine at position 37 (t(6)A37) in tRNAs that read codons beginning with adenine. Catalyzes the conversion of L-threonine, HCO(3)(-)/CO(2) and ATP to give threonylcarbamoyl-AMP (TC-AMP) as the acyladenylate intermediate, with the release of diphosphate. This Shewanella amazonensis (strain ATCC BAA-1098 / SB2B) protein is Threonylcarbamoyl-AMP synthase.